The chain runs to 524 residues: Nucleoporin NUP56 (524 aa).

Residues 1-219 (MADDPHNTST…SSMAKFASST (219 aa)) are disordered. Basic and acidic residues-rich tracts occupy residues 28-80 (VKED…EPEK), 114-168 (THDE…KEVE), and 179-199 (SAEKPKIEEKKDESKDTKVDK). The short motif at 37 to 44 (ARRELKQT) is the Nuclear localization signal element. Positions 111–133 (KKRTHDELEQDGKEEEEKKEGEK) form a coiled coil. Positions 200 to 219 (PQTSSSAFANSSMAKFASST) are enriched in polar residues. FG repeat units lie at residues 223–224 (FG), 226–227 (FG), 237–238 (FG), 247–248 (FG), 266–267 (FG), 312–313 (FG), and 328–329 (FG). Disordered stretches follow at residues 247-284 (FGSKSADASAAPAGPPKLSFGSASAASPFASLNGQAGG) and 300-371 (GSSA…GEEK). A compositionally biased stretch (low complexity) spans 248 to 277 (GSKSADASAAPAGPPKLSFGSASAASPFAS). Acidic residues-rich tracts occupy residues 332 to 345 (ESDEEDEGEGEEGE) and 352 to 362 (GEGEEKEEEEK). Positions 345–376 (EENKSENGEGEEKEEEEKEEKASGEEKKKFKL) form a coiled coil. In terms of domain architecture, RanBD1 spans 377–475 (QKVHIDDGEG…TPILPAMKFQ (99 aa)). A coiled-coil region spans residues 503 to 524 (SQANATQFSNMVEKIKEKLAAA).

The nuclear pore complex (NPC) constitutes the exclusive means of nucleocytoplasmic transport. NPCs allow the passive diffusion of ions and small molecules and the active, nuclear transport receptor-mediated bidirectional transport of macromolecules such as proteins, RNAs, ribonucleoparticles (RNPs), and ribosomal subunits across the nuclear envelope. The 55-60 MDa NPC is composed of at least 28 different subunits: AMO1, ELYS, GLE1, GLE2, MLP1, NDC1, NIC96, NSP1, NUP133, NUP145, NUP152, NUP159, NUP170, NUP188, NUP192, NUP37, NUP49, NUP53, NUP56, NUP57, NUP82, NUP84, NUP85, POM152, POM33, POM34, SEC13 and SEH1. Due to its 8-fold rotational symmetry, all subunits are present with 8 copies or multiples thereof.

The protein resides in the nucleus. It localises to the nuclear pore complex. The protein localises to the nucleus membrane. In terms of biological role, functions as a component of the nuclear pore complex (NPC). NPC components, collectively referred to as nucleoporins (NUPs), can play the role of both NPC structural components and of docking or interaction partners for transiently associated nuclear transport factors. Active directional transport is assured by both, a Phe-Gly (FG) repeat affinity gradient for these transport factors across the NPC and a transport cofactor concentration gradient across the nuclear envelope (GSP1 and GSP2 GTPases associated predominantly with GTP in the nucleus, with GDP in the cytoplasm). The polypeptide is Nucleoporin NUP56 (NUP56) (Chaetomium thermophilum (strain DSM 1495 / CBS 144.50 / IMI 039719) (Thermochaetoides thermophila)).